We begin with the raw amino-acid sequence, 221 residues long: 7-cyano-7-deazaguanine synthase (221 aa).

M8 to A18 contributes to the ATP binding site. Zn(2+) contacts are provided by C187, C195, C198, and C201.

This sequence belongs to the QueC family. Requires Zn(2+) as cofactor.

The enzyme catalyses 7-carboxy-7-deazaguanine + NH4(+) + ATP = 7-cyano-7-deazaguanine + ADP + phosphate + H2O + H(+). The protein operates within purine metabolism; 7-cyano-7-deazaguanine biosynthesis. In terms of biological role, catalyzes the ATP-dependent conversion of 7-carboxy-7-deazaguanine (CDG) to 7-cyano-7-deazaguanine (preQ(0)). This chain is 7-cyano-7-deazaguanine synthase, found in Campylobacter concisus (strain 13826).